The following is a 128-amino-acid chain: Nucleoside diphosphate kinase B (128 aa).

Met1 carries the post-translational modification N-acetylmethionine. ATP contacts are provided by Lys9, Phe39, Thr70, Arg81, and Asn91. The Pros-phosphohistidine intermediate role is filled by His94.

This sequence belongs to the NDK family. Mg(2+) is required as a cofactor.

Its subcellular location is the cytoplasm. It localises to the nucleus. The protein resides in the cell projection. The protein localises to the lamellipodium. It is found in the ruffle. It catalyses the reaction a 2'-deoxyribonucleoside 5'-diphosphate + ATP = a 2'-deoxyribonucleoside 5'-triphosphate + ADP. The catalysed reaction is a ribonucleoside 5'-diphosphate + ATP = a ribonucleoside 5'-triphosphate + ADP. In terms of biological role, major role in the synthesis of nucleoside triphosphates other than ATP. In Merluccius australis australis (Austral hake), this protein is Nucleoside diphosphate kinase B (nme2).